Reading from the N-terminus, the 428-residue chain is GTPase Obg (428 aa).

The region spanning 1–158 (MFVDQVKIYV…RYIVLELKVL (158 aa)) is the Obg domain. The disordered stretch occupies residues 118 to 143 (KGGRGGRGNTRFATPANPAPQLSENG). Positions 159–329 (ADVGLVGFPS…LLFEIADRLE (171 aa)) constitute an OBG-type G domain. GTP is bound by residues 165 to 172 (GFPSVGKS), 190 to 194 (FTTLN), 212 to 215 (DLPG), 282 to 285 (NKMD), and 310 to 312 (SAV). Residues S172 and T192 each contribute to the Mg(2+) site. One can recognise an OCT domain in the interval 350 to 428 (KLEDEEAPFE…LLEFEFEFID (79 aa)).

The protein belongs to the TRAFAC class OBG-HflX-like GTPase superfamily. OBG GTPase family. Monomer. The cofactor is Mg(2+).

The protein resides in the cytoplasm. Its function is as follows. An essential GTPase which binds GTP, GDP and possibly (p)ppGpp with moderate affinity, with high nucleotide exchange rates and a fairly low GTP hydrolysis rate. Plays a role in control of the cell cycle, stress response, ribosome biogenesis and in those bacteria that undergo differentiation, in morphogenesis control. The sequence is that of GTPase Obg from Bacillus licheniformis (strain ATCC 14580 / DSM 13 / JCM 2505 / CCUG 7422 / NBRC 12200 / NCIMB 9375 / NCTC 10341 / NRRL NRS-1264 / Gibson 46).